Here is a 466-residue protein sequence, read N- to C-terminus: 3-isopropylmalate dehydratase large subunit (466 aa).

3 residues coordinate [4Fe-4S] cluster: C349, C410, and C413.

The protein belongs to the aconitase/IPM isomerase family. LeuC type 1 subfamily. As to quaternary structure, heterodimer of LeuC and LeuD. The cofactor is [4Fe-4S] cluster.

The enzyme catalyses (2R,3S)-3-isopropylmalate = (2S)-2-isopropylmalate. It participates in amino-acid biosynthesis; L-leucine biosynthesis; L-leucine from 3-methyl-2-oxobutanoate: step 2/4. In terms of biological role, catalyzes the isomerization between 2-isopropylmalate and 3-isopropylmalate, via the formation of 2-isopropylmaleate. This Ruthia magnifica subsp. Calyptogena magnifica protein is 3-isopropylmalate dehydratase large subunit.